We begin with the raw amino-acid sequence, 312 residues long: Acetyl-coenzyme A carboxylase carboxyl transferase subunit alpha (312 aa).

A CoA carboxyltransferase C-terminal domain is found at 36-286 (RLDKEVKSIY…KEYFLDALRT (251 aa)).

The protein belongs to the AccA family. Acetyl-CoA carboxylase is a heterohexamer composed of biotin carboxyl carrier protein (AccB), biotin carboxylase (AccC) and two subunits each of ACCase subunit alpha (AccA) and ACCase subunit beta (AccD).

The protein localises to the cytoplasm. It catalyses the reaction N(6)-carboxybiotinyl-L-lysyl-[protein] + acetyl-CoA = N(6)-biotinyl-L-lysyl-[protein] + malonyl-CoA. Its pathway is lipid metabolism; malonyl-CoA biosynthesis; malonyl-CoA from acetyl-CoA: step 1/1. Functionally, component of the acetyl coenzyme A carboxylase (ACC) complex. First, biotin carboxylase catalyzes the carboxylation of biotin on its carrier protein (BCCP) and then the CO(2) group is transferred by the carboxyltransferase to acetyl-CoA to form malonyl-CoA. This is Acetyl-coenzyme A carboxylase carboxyl transferase subunit alpha from Helicobacter pylori (strain HPAG1).